The primary structure comprises 590 residues: Guanylate-binding protein 5 (590 aa).

An NLRP3-binding region spans residues 1 to 306; it reads MAPEIHMPEP…LTYVDAINSG (306 aa). The GTPase domain (Globular) stretch occupies residues 1–310; that stretch reads MAPEIHMPEP…DAINSGALPS (310 aa). Positions 35–277 constitute a GB1/RHD3-type G domain; it reads TQPVVVVAIV…FCSHIFTQSK (243 aa). GTP-binding positions include 45-52, 67-69, 182-183, and Leu246; these read GLYRTGKS, VGS, and RD. A required for tetramerization, but not for dimerization region spans residues 529–590; the sequence is QIALEKARVA…RRHHHDCVIS (62 aa). Cys587 is subject to Cysteine methyl ester. Cys587 carries S-geranylgeranyl cysteine lipidation. The propeptide at 588 to 590 is removed in mature form; that stretch reads VIS.

Belongs to the TRAFAC class dynamin-like GTPase superfamily. GB1/RHD3 GTPase family. GB1 subfamily. Homodimer; homodimerizes upon GTP-binding, forming a close face-to-face dimer. Heterodimer with other family members, including GBP1, GBP2, GBP3 and GBP4. May also form tetramers (dimer of dimers) in the presence of GTP. Interacts with NLRP3, possibly in its tetrameric form, and promotes PYCARD/ASC polymerization. In terms of processing, isoprenylation is required for proper subcellular location. As to expression, low expression, if any, in many tissues in the absence of stimulation.

The protein resides in the cytoplasmic vesicle membrane. Its subcellular location is the golgi apparatus membrane. The protein localises to the cytoplasm. The catalysed reaction is GTP + H2O = GDP + phosphate + H(+). In terms of biological role, interferon (IFN)-inducible GTPase that plays important roles in innate immunity against a diverse range of bacterial, viral and protozoan pathogens. Hydrolyzes GTP, but in contrast to other family members, does not produce GMP. Following infection, recruited to the pathogen-containing vacuoles or vacuole-escaped bacteria and acts as a positive regulator of inflammasome assembly by promoting the release of inflammasome ligands from bacteria. Acts by promoting lysis of pathogen-containing vacuoles, releasing pathogens into the cytosol. Following pathogen release in the cytosol, promotes recruitment of proteins that mediate bacterial cytolysis, such as Gm12250/Irgb10: this liberates ligands that are detected by inflammasomes, such as lipopolysaccharide (LPS) that activates the non-canonical CASP4/CASP11 inflammasome or double-stranded DNA (dsDNA) that activates the AIM2 inflammasome. As an activator of NLRP3 inflammasome assembly: promotes selective NLRP3 inflammasome assembly in response to microbial and soluble, but not crystalline, agents. Independently of its GTPase activity, acts as an inhibitor of various viruses infectivity by inhibiting FURIN-mediated maturation of viral envelope proteins. The chain is Guanylate-binding protein 5 from Mus musculus (Mouse).